A 357-amino-acid chain; its full sequence is cAMP-responsive element modulator (357 aa).

Residues Glu-20–Gln-43 form a disordered region. Basic and acidic residues predominate over residues Gln-25–Ser-39. Positions Thr-101–Gly-160 constitute a KID domain. Ser-116, Ser-142, Ser-284, Ser-287, and Ser-290 each carry phosphoserine. A bZIP domain is found at Thr-299–Asp-357. A basic motif region spans residues Arg-300–Lys-325. Residues Leu-327–Leu-348 are leucine-zipper.

It belongs to the bZIP family. As to quaternary structure, binds DNA as a dimer. Interacts with CDC34. Interacts with FHL5. May interact with TSSK4. Isoform 1 forms a heterodimer with CREB3L4. Post-translationally, stimulated by phosphorylation. Phosphorylated on Ser-116 by TSSK4 in vitro. Ubiquitinated by CDC34 and RAD6B in order to be degraded by the proteasome. In terms of tissue distribution, expressed in the testis.

The protein resides in the nucleus. It localises to the cytoplasm. Functionally, transcriptional regulator that binds the cAMP response element (CRE), a sequence present in many viral and cellular promoters. Isoforms are either transcriptional activators or repressors. Isoform 2, isoform 3 and isoform 4 are repressors, while isoform 1 is an activator. Plays a role in spermatogenesis and is involved in spermatid maturation. Binding of isoform 1 (activator) to CRE is increased by CREB3L4. The CREM isoform 1-CREB3L4 heterodimer functions through CRE and may recruit HIRA to CRE to regulate histone exchange. Plays a role in the regulation of the circadian clock: acts as a transcriptional repressor of the core circadian component PER1 by directly binding to cAMP response elements in its promoter. The polypeptide is cAMP-responsive element modulator (Crem) (Mus musculus (Mouse)).